The sequence spans 184 residues: Photosystem I assembly protein Ycf4 (184 aa).

The next 2 membrane-spanning stretches (helical) occupy residues 22 to 42 (FCWA…GTSS) and 57 to 77 (IIFF…LFIS).

This sequence belongs to the Ycf4 family.

It is found in the plastid. Its subcellular location is the chloroplast thylakoid membrane. Seems to be required for the assembly of the photosystem I complex. This is Photosystem I assembly protein Ycf4 from Arabis hirsuta (Hairy rock-cress).